Here is a 320-residue protein sequence, read N- to C-terminus: tRNA dimethylallyltransferase (320 aa).

ATP is bound at residue 17–24 (GPTAVGKT). A substrate-binding site is contributed by 19-24 (TAVGKT). An interaction with substrate tRNA region spans residues 42-45 (DSMQ).

The protein belongs to the IPP transferase family. Monomer. The cofactor is Mg(2+).

The enzyme catalyses adenosine(37) in tRNA + dimethylallyl diphosphate = N(6)-dimethylallyladenosine(37) in tRNA + diphosphate. Catalyzes the transfer of a dimethylallyl group onto the adenine at position 37 in tRNAs that read codons beginning with uridine, leading to the formation of N6-(dimethylallyl)adenosine (i(6)A). In Bacillus thuringiensis (strain Al Hakam), this protein is tRNA dimethylallyltransferase.